The sequence spans 142 residues: Hemoglobin subunit alpha-2 (142 aa).

In terms of domain architecture, Globin spans 2 to 142 (VLSAADKSNI…VSTVLTSKYR (141 aa)). O2 is bound at residue H59. A heme b-binding site is contributed by H88.

It belongs to the globin family. In terms of assembly, heterotetramer of two alpha chains and two beta chains. Red blood cells.

Functionally, involved in oxygen transport from the lung to the various peripheral tissues. The sequence is that of Hemoglobin subunit alpha-2 from Bubalus bubalis (Domestic water buffalo).